Reading from the N-terminus, the 213-residue chain is Pyrrolidone-carboxylate peptidase (213 aa).

Residues Glu-78, Cys-141, and His-165 contribute to the active site.

This sequence belongs to the peptidase C15 family. As to quaternary structure, homotetramer.

It is found in the cytoplasm. The catalysed reaction is Release of an N-terminal pyroglutamyl group from a polypeptide, the second amino acid generally not being Pro.. Removes 5-oxoproline from various penultimate amino acid residues except L-proline. In Finegoldia magna (strain ATCC 29328 / DSM 20472 / WAL 2508) (Peptostreptococcus magnus), this protein is Pyrrolidone-carboxylate peptidase.